Consider the following 322-residue polypeptide: MTQEIRTVAIVGCGVIGMGWAVLFLSRGLKVIISDPMEGAENALKGYFEQSRSYLEGFGDYDKLVSNYEFVHDIASRLAEADLIQENGPERLEFKRGLIATLDKYARPGVVIASSSSGLPSSEFIQQCKQDSTRVLIGHPFNPPHLIPLVEVVPHPGTSSESVNTALNFYRSVGKRPILLHHEVPGFVSNRLQAAINNEAYSLISRGIVSAEDLDAAVTSGPGLRWALTGPIATNALGGGGGPEGFSQRMERLGPAIRGWEDDILKHRFDWSEQRMSALQESVNKSLGAVKWDQLVEERDLVLLQLLAAKQKMASMSTPSGH.

The chain crosses the membrane as a helical span at residues 5-25; the sequence is IRTVAIVGCGVIGMGWAVLFL. The active-site For hydroxyacyl-coenzyme A dehydrogenase activity is E151.

The protein belongs to the 3-hydroxyacyl-CoA dehydrogenase family.

The protein resides in the membrane. 3-hydroxyacyl-CoA dehydrogenase; part of the Fusarium detoxification of benzoxazolinone cluster 2 (FDB2) involved in the degradation of benzoxazolinones produced by the host plant. Maize, wheat, and rye produce the 2 benzoxazinone phytoanticipins 2,4-dihy-droxy-7-methoxy-1,4-benzoxazin-3-one (DIMBOA) and 2,4-dihydroxy-1,4-benzoxazin-3-one (DIBOA) that, due to their inherent instability once released, spontaneously degrade to the more stable corresponding benzoxazolinones, 6-methoxy-2-benzoxazolinone (MBOA) and 2-benzoxazolinone (BOA), respectively. The first step in the detoxification of benzoxazolinones involves the hydrolysis of the cyclic ester bond of benzoxazolinones by the FDB1 cluster gamma-lactamase MBL1 to aminophenols. MBL1 is able to convert BOA into 2-aminophenol (2-AP), as well as MBOA into 5-methoxy-2-aminophenol (2-AMP). The FDB2 cluster N-malonyltransferase FDB2/NAT1 then metabolizes aminophenols via N-malonylation to non-toxic malonamic acids. FDB2/NAT1 converts 2-AP into N-(2-hydroxyphenyl) malonamic acid (HPMA) and 2-AMP into N-(2-hydroxy-4-methoxyphenyl) malonamic acid (HMPMA). The duplicated dienlactone hydrolases DLH1 and DLH2 may provide redundant function for hydrolyzing the lactone moiety in the BOA molecule. The roles of the amidases an other enzymes encoded by the 2 FDB clusters have not been identified so far. This is 3-hydroxyacyl-CoA dehydrogenase FVEG_12628 from Gibberella moniliformis (strain M3125 / FGSC 7600) (Maize ear and stalk rot fungus).